Consider the following 287-residue polypeptide: Nematocyst expressed protein 6 (287 aa).

Residues 1 to 20 (MKGFIFAGVLVSALICLAEG) form the signal peptide. One can recognise a Peptidase M12A domain in the interval 53–249 (RAALRDRYLW…RQTNLMYKCN (197 aa)). Intrachain disulfides connect cysteine 95–cysteine 248 and cysteine 116–cysteine 139. Histidine 146 contacts Zn(2+). The active site involves glutamate 147. Residues histidine 150 and histidine 156 each coordinate Zn(2+). Positions 249 to 287 (NAQGDSELQPVNDEDEDKDGGDSKKKPDPKGPKPGEIEE) are disordered. The segment covering 268-287 (GGDSKKKPDPKGPKPGEIEE) has biased composition (basic and acidic residues).

Zn(2+) serves as cofactor. As to expression, nematocyte and pharyngeal gland.

It is found in the secreted. It localises to the nematocyst. Its function is as follows. Metalloprotease. This chain is Nematocyst expressed protein 6, found in Nematostella vectensis (Starlet sea anemone).